Here is a 512-residue protein sequence, read N- to C-terminus: 2-isopropylmalate synthase (512 aa).

Residues 4–266 (IQFFDTTLRD…ETNIVLNQFK (263 aa)) enclose the Pyruvate carboxyltransferase domain. Residues D13, H201, H203, and N237 each coordinate Mn(2+). Positions 390–512 (ELKHLQVQYV…SKQADFEEVK (123 aa)) are regulatory domain.

It belongs to the alpha-IPM synthase/homocitrate synthase family. LeuA type 1 subfamily. As to quaternary structure, homodimer. The cofactor is Mn(2+).

The protein resides in the cytoplasm. It carries out the reaction 3-methyl-2-oxobutanoate + acetyl-CoA + H2O = (2S)-2-isopropylmalate + CoA + H(+). The protein operates within amino-acid biosynthesis; L-leucine biosynthesis; L-leucine from 3-methyl-2-oxobutanoate: step 1/4. Its function is as follows. Catalyzes the condensation of the acetyl group of acetyl-CoA with 3-methyl-2-oxobutanoate (2-ketoisovalerate) to form 3-carboxy-3-hydroxy-4-methylpentanoate (2-isopropylmalate). The sequence is that of 2-isopropylmalate synthase from Listeria innocua serovar 6a (strain ATCC BAA-680 / CLIP 11262).